Reading from the N-terminus, the 807-residue chain is MTQVIVRNSLDKPFGKLANDAEVPLAVKTEDYSSVINYVYSNLLPFGTFREELMATPPSRVLSTFIQMRKHIKKSIIQSSAHTAIMVESERDPVFRQALLETSPQKIVYKSNNKFMGVGEDGTGDNIYGAALEQVRNELQAEKDRDAHQEAVYLAYIAEVNLKKALRKHNLEKYISKDRKRSIKRLVDALVQDYGKTQVFDNSPDIDTIMTLHEKRNIMVYTDPNALIRIVRKNTIRAVLAKNLLELRVAALNAFVDYAISKNVVRSEDKSRLKDQLFDIELGKRNDFSKRILDLFEAKALPDEIKNVIKKFKAQWYFPRDDEIEHFERETVKIPVPQATTTQQATAEPAETYTVSYDSDSVLSPLRRTQALNLNMLLFPTISHFIAFEVNKKYELTSIRGLYDTIKKIPIRTLDAWSKTHEQQTMEQRKLLLLEEAITHKLMDYSVKHLVWAIRDLKFEDKYNPDETTQIYRKYMDKINLRIQKIPSFEEFVEKDPMVHEVVREKVDFYFTILDNLMVHTKYKFNFKVSYDDLVKMSPFHGFILMDSVQISRLPIPDYLQWKNSRYGLSTESLVQIWTIVYNGLKQSEKLVGINDWDIRYKSCFIWAKYLLGQEIRSRRLNVMESRREDEVLLAILSVLFKLKEVNLRFGLSALNFQDLQTALYLCLGRVRQYVPKGNKPDLRPPPTLVADSMFDQPDIQLAPLVEPEEEVDETQVEIYEPEQMDDQEYNEYDYYRDYDEEFEGFNLNARKKFGIFFHEFYAPLENKIQLPELEDAINSFIKSSVPRSVKNQNLNFFITNFRVPDI.

This sequence belongs to the IIV-6 155L family.

This is an uncharacterized protein from Aedes vexans (Inland floodwater mosquito).